The chain runs to 348 residues: Alcohol dehydrogenase 2 (348 aa).

Residues Cys-44, His-67, Cys-98, Cys-101, Cys-104, Cys-112, and Cys-154 each contribute to the Zn(2+) site. NAD(+) contacts are provided by residues 178-184, Asp-202, Lys-207, 269-271, and Arg-341; these read GAAGGLG and VGL.

It belongs to the zinc-containing alcohol dehydrogenase family. As to quaternary structure, homotetramer. It depends on Zn(2+) as a cofactor.

It is found in the cytoplasm. It carries out the reaction a primary alcohol + NAD(+) = an aldehyde + NADH + H(+). The enzyme catalyses a secondary alcohol + NAD(+) = a ketone + NADH + H(+). This is Alcohol dehydrogenase 2 (ADH2) from Candida albicans (strain SC5314 / ATCC MYA-2876) (Yeast).